Reading from the N-terminus, the 201-residue chain is Natural cytotoxicity triggering receptor 3 (201 aa).

A signal peptide spans 1–18; the sequence is MAWMLLLILIMVHPGSCA. Residues 19-126 enclose the Ig-like domain; that stretch reads LWVSQPPEIR…VGTGNGTRLV (108 aa). At 19–135 the chain is on the extracellular side; it reads LWVSQPPEIR…VVEKEHPQLG (117 aa). A disulfide bond links Cys-39 and Cys-108. Residues Asn-42 and Asn-121 are each glycosylated (N-linked (GlcNAc...) asparagine). The helical transmembrane segment at 136 to 156 threads the bilayer; sequence AGTVLLLRAGFYAVSFLSVAV. At 157-201 the chain is on the cytoplasmic side; it reads GSTVYYQGKCLTWKGPRRQLPAVVPAPLPPPCGSSAQLLPPVPGG.

Belongs to the natural cytotoxicity receptor (NCR) family. In terms of assembly, homodimer in the unliganted form. Interacts with CD3Z. Interacts with and is activated by binding to NCR3LG1. Interacts with and is activated by binding to BAG6. Interacts with and is inhibited by binding to LGALS3.

It is found in the cell membrane. In terms of biological role, cell membrane receptor of natural killer/NK cells that is activated by binding of extracellular ligands including BAG6 and NCR3LG1. Stimulates NK cells cytotoxicity toward neighboring cells producing these ligands. It controls, for instance, NK cells cytotoxicity against tumor cells. Engagement of NCR3 by BAG6 also promotes myeloid dendritic cells (DC) maturation, both through killing DCs that did not acquire a mature phenotype, and inducing the release by NK cells of TNFA and IFNG that promote DC maturation. The sequence is that of Natural cytotoxicity triggering receptor 3 (NCR3) from Pan troglodytes (Chimpanzee).